Reading from the N-terminus, the 322-residue chain is Probable ethanolamine-phosphate cytidylyltransferase (322 aa).

Belongs to the cytidylyltransferase family.

It carries out the reaction phosphoethanolamine + CTP + H(+) = CDP-ethanolamine + diphosphate. The protein operates within phospholipid metabolism; phosphatidylethanolamine biosynthesis; phosphatidylethanolamine from ethanolamine: step 2/3. In Encephalitozoon cuniculi (strain GB-M1) (Microsporidian parasite), this protein is Probable ethanolamine-phosphate cytidylyltransferase (MUQ1).